Reading from the N-terminus, the 222-residue chain is 7-cyano-7-deazaguanine synthase (222 aa).

Residue 14-24 coordinates ATP; it reads FSGGQDSTTCL. The Zn(2+) site is built by Cys192, Cys201, Cys204, and Cys207.

Belongs to the QueC family. In terms of assembly, homodimer. The cofactor is Zn(2+).

The enzyme catalyses 7-carboxy-7-deazaguanine + NH4(+) + ATP = 7-cyano-7-deazaguanine + ADP + phosphate + H2O + H(+). The protein operates within purine metabolism; 7-cyano-7-deazaguanine biosynthesis. Functionally, catalyzes the ATP-dependent conversion of 7-carboxy-7-deazaguanine (CDG) to 7-cyano-7-deazaguanine (preQ(0)). The sequence is that of 7-cyano-7-deazaguanine synthase from Clostridium acetobutylicum (strain ATCC 824 / DSM 792 / JCM 1419 / IAM 19013 / LMG 5710 / NBRC 13948 / NRRL B-527 / VKM B-1787 / 2291 / W).